Here is a 138-residue protein sequence, read N- to C-terminus: Chorion protein S16 (138 aa).

Residues 1–20 form the signal peptide; it reads MSATLRLLCLMACCVALAVA.

Belongs to the chorion protein S16 family.

The protein resides in the secreted. Chorion membrane (egg shell) protein; plays a role in protecting the egg from the environment. The polypeptide is Chorion protein S16 (Cp16) (Drosophila melanogaster (Fruit fly)).